The primary structure comprises 500 residues: L-arabinose isomerase (500 aa).

The Mn(2+) site is built by E306, E333, H350, and H450.

Belongs to the arabinose isomerase family. In terms of assembly, homohexamer. Requires Mn(2+) as cofactor.

It carries out the reaction beta-L-arabinopyranose = L-ribulose. The protein operates within carbohydrate degradation; L-arabinose degradation via L-ribulose; D-xylulose 5-phosphate from L-arabinose (bacterial route): step 1/3. Its function is as follows. Catalyzes the conversion of L-arabinose to L-ribulose. In Salmonella enteritidis PT4 (strain P125109), this protein is L-arabinose isomerase.